We begin with the raw amino-acid sequence, 499 residues long: MDLSTAFPTLVTDLPAAFSMSVVGGVGLAMIVLDAFRNDHPAIPWLGVAALGVSAVWEITHLGAPPSTVFFETLRTGGFVAFINLIILLTGLATILLSVPYLNQLRYDYGEVYALIMFCTVGMIMLGSANNMVSIFLGLETMSVCLYVLTGFIREDEGAVESALKYFLLGAFSTGFFLYGIALMYGATGTMALPAMAAAELGTLSTRLLFWGGFALFLVGFFFKVSAAPFHMWTPDVYQGAPTPLTGYMSTATKAAAFAALILVLVHAVPGGEWQLSVAAVAVLTMVIGNVMALAQTNVKRLLAYSSIAHAGYLLVGLSAGTSAGYAGALFYLLVYAVMNIGAFGVMSMLEWDGKEGREQTLSSLAGIANDRPVLGSTMGVFMLSLIGFPPLGGFIGKYLVFAPAVDAGLTWLVVIGVLMSALSAYYYLRVVYVFWMQSADEVAATDPVRAAAFPRATVAATGTLVVCAVALVVLGVFFGGVLETTLGFFETTAMATAP.

Helical transmembrane passes span Ala-16–Phe-36, Ala-42–Leu-62, Gly-77–Leu-97, Tyr-109–Ala-129, Val-133–Ile-153, Phe-167–Ala-187, Leu-208–Ala-228, Ala-252–Gly-272, Trp-274–Leu-294, Leu-302–Thr-322, Ala-327–Met-347, Gly-376–Ile-396, Thr-411–Tyr-433, and Gly-463–Leu-483.

Belongs to the complex I subunit 2 family. NDH-1 is composed of 14 different subunits. Subunits NuoA, H, J, K, L, M, N constitute the membrane sector of the complex.

It is found in the cell inner membrane. It carries out the reaction a quinone + NADH + 5 H(+)(in) = a quinol + NAD(+) + 4 H(+)(out). NDH-1 shuttles electrons from NADH, via FMN and iron-sulfur (Fe-S) centers, to quinones in the respiratory chain. The immediate electron acceptor for the enzyme in this species is believed to be a menaquinone. Couples the redox reaction to proton translocation (for every two electrons transferred, four hydrogen ions are translocated across the cytoplasmic membrane), and thus conserves the redox energy in a proton gradient. The sequence is that of NADH-quinone oxidoreductase subunit N from Salinibacter ruber (strain DSM 13855 / M31).